Here is a 160-residue protein sequence, read N- to C-terminus: Cytochrome c-type biogenesis protein CcmE (160 aa).

Over 1-7 the chain is Cytoplasmic; that stretch reads MTRKQRR. A helical; Signal-anchor for type II membrane protein membrane pass occupies residues 8-28; it reads ATFIAVSLGILALAVGLVLYA. The Periplasmic portion of the chain corresponds to 29–160; it reads MRDSIVYFYS…SETYGQGSYP (132 aa). 2 residues coordinate heme: His-122 and Tyr-126. Positions 141–160 are disordered; the sequence is WQGEGAEAPHSETYGQGSYP.

It belongs to the CcmE/CycJ family.

It is found in the cell inner membrane. Heme chaperone required for the biogenesis of c-type cytochromes. Transiently binds heme delivered by CcmC and transfers the heme to apo-cytochromes in a process facilitated by CcmF and CcmH. This chain is Cytochrome c-type biogenesis protein CcmE, found in Parvibaculum lavamentivorans (strain DS-1 / DSM 13023 / NCIMB 13966).